The following is an 87-amino-acid chain: Large ribosomal subunit protein bL31B (87 aa).

The protein belongs to the bacterial ribosomal protein bL31 family. Type B subfamily. As to quaternary structure, part of the 50S ribosomal subunit.

The chain is Large ribosomal subunit protein bL31B from Halorhodospira halophila (strain DSM 244 / SL1) (Ectothiorhodospira halophila (strain DSM 244 / SL1)).